Here is a 388-residue protein sequence, read N- to C-terminus: Purple acid phosphatase 19 (388 aa).

The N-terminal stretch at 1-24 is a signal peptide; that stretch reads MGLNHLTLVCSAIALLSIFVVSQA. 2 N-linked (GlcNAc...) asparagine glycosylation sites follow: asparagine 97 and asparagine 111. Residues aspartate 145 and tyrosine 148 each contribute to the Fe cation site. Aspartate 145 is a binding site for Zn(2+). Asparagine 182 is a binding site for Zn(2+). Position 182 (asparagine 182) interacts with substrate. The N-linked (GlcNAc...) asparagine glycan is linked to asparagine 226. Histidine 238 is a Zn(2+) binding site. The active-site Proton donor is histidine 248. A Zn(2+)-binding site is contributed by histidine 275. 275-277 contacts substrate; the sequence is HVH. Histidine 277 contributes to the Fe cation binding site. N-linked (GlcNAc...) asparagine glycans are attached at residues asparagine 291 and asparagine 348.

Belongs to the metallophosphoesterase superfamily. Purple acid phosphatase family. In terms of assembly, homodimer. Fe cation is required as a cofactor. The cofactor is Zn(2+). Specifically expressed in flowers.

Its subcellular location is the secreted. It carries out the reaction a phosphate monoester + H2O = an alcohol + phosphate. The polypeptide is Purple acid phosphatase 19 (PAP19) (Arabidopsis thaliana (Mouse-ear cress)).